We begin with the raw amino-acid sequence, 141 residues long: AsCystatin (141 aa).

The first 26 residues, 1 to 26 (MVHSQLPVAAPLRLLCALLLLPLATM), serve as a signal peptide directing secretion. The 101-residue stretch at 29-129 (GGLSPRSVTD…CRFQVWSCPW (101 aa)) folds into the Cystatin domain. A Secondary area of contact motif is present at residues 73 to 77 (QVVTG). Disulfide bonds link Cys91–Cys107 and Cys120–Cys140.

Belongs to the cystatin family. Expressed at a low level by the venom gland (at protein level).

It is found in the secreted. Its function is as follows. Recombinant AsCystatin inhibits various C1 cysteine proteases including cathepsin L (Ki is 0.89 pM), papain (Ki is 1.74 pM) and cathepsin B (Ki is 0.69 nM). This activity has also been observed in the crude venom. This protein has no toxic activity and its function in the venom is unknown. It may play a role as a housekeeping or regulatory protein. In Austrelaps superbus (Lowland copperhead snake), this protein is AsCystatin.